The chain runs to 94 residues: Small ribosomal subunit protein bS16c (94 aa).

It belongs to the bacterial ribosomal protein bS16 family.

It localises to the plastid. The protein resides in the chloroplast. This Phalaenopsis aphrodite subsp. formosana (Moth orchid) protein is Small ribosomal subunit protein bS16c.